A 304-amino-acid chain; its full sequence is N-acetylmuramic acid 6-phosphate etherase (304 aa).

Residues 60–221 enclose the SIS domain; it reads GVSVLRHGGR…STAVMVRLGY (162 aa). Glu-88 (proton donor) is an active-site residue. The active site involves Glu-119.

This sequence belongs to the GCKR-like family. MurNAc-6-P etherase subfamily. As to quaternary structure, homodimer.

The catalysed reaction is N-acetyl-D-muramate 6-phosphate + H2O = N-acetyl-D-glucosamine 6-phosphate + (R)-lactate. Its pathway is amino-sugar metabolism; N-acetylmuramate degradation. Functionally, specifically catalyzes the cleavage of the D-lactyl ether substituent of MurNAc 6-phosphate, producing GlcNAc 6-phosphate and D-lactate. This Thermobifida fusca (strain YX) protein is N-acetylmuramic acid 6-phosphate etherase.